The chain runs to 250 residues: UPF0736 protein YjbA (250 aa).

Belongs to the UPF0736 family.

The protein is UPF0736 protein YjbA (yjbA) of Bacillus subtilis (strain 168).